The chain runs to 286 residues: Bifunctional protein FolD (286 aa).

NADP(+) contacts are provided by residues 166-168 (GAS) and Ile232.

It belongs to the tetrahydrofolate dehydrogenase/cyclohydrolase family. As to quaternary structure, homodimer.

The enzyme catalyses (6R)-5,10-methylene-5,6,7,8-tetrahydrofolate + NADP(+) = (6R)-5,10-methenyltetrahydrofolate + NADPH. It catalyses the reaction (6R)-5,10-methenyltetrahydrofolate + H2O = (6R)-10-formyltetrahydrofolate + H(+). It participates in one-carbon metabolism; tetrahydrofolate interconversion. Its function is as follows. Catalyzes the oxidation of 5,10-methylenetetrahydrofolate to 5,10-methenyltetrahydrofolate and then the hydrolysis of 5,10-methenyltetrahydrofolate to 10-formyltetrahydrofolate. This Vibrio parahaemolyticus serotype O3:K6 (strain RIMD 2210633) protein is Bifunctional protein FolD.